Reading from the N-terminus, the 255-residue chain is Electron transfer flavoprotein beta subunit lysine methyltransferase (255 aa).

The transit peptide at 1 to 32 directs the protein to the mitochondrion; that stretch reads MAFSLCWKAPRSPWSFLQAVNNGSPLFLWRTV.

Belongs to the methyltransferase superfamily. ETFBKMT family. In terms of assembly, interacts with HSPD1; this protein may possibly be a methylation substrate.

Its subcellular location is the cytoplasm. It is found in the mitochondrion matrix. It catalyses the reaction L-lysyl-[protein] + 3 S-adenosyl-L-methionine = N(6),N(6),N(6)-trimethyl-L-lysyl-[protein] + 3 S-adenosyl-L-homocysteine + 3 H(+). Its function is as follows. Protein-lysine methyltransferase that selectively trimethylates the flavoprotein ETFB in mitochondria. Thereby, may negatively regulate the function of ETFB in electron transfer from Acyl-CoA dehydrogenases. This chain is Electron transfer flavoprotein beta subunit lysine methyltransferase, found in Mus musculus (Mouse).